The following is a 37-amino-acid chain: Cytochrome b6-f complex subunit 7 (37 aa).

Residues alanine 11–leucine 29 form a helical membrane-spanning segment.

It belongs to the PetM family. As to quaternary structure, the 4 large subunits of the cytochrome b6-f complex are cytochrome b6, subunit IV (17 kDa polypeptide, PetD), cytochrome f and the Rieske protein, while the 4 small subunits are PetG, PetL, PetM and PetN. The complex functions as a dimer.

It localises to the cellular thylakoid membrane. Functionally, component of the cytochrome b6-f complex, which mediates electron transfer between photosystem II (PSII) and photosystem I (PSI), cyclic electron flow around PSI, and state transitions. The protein is Cytochrome b6-f complex subunit 7 of Rippkaea orientalis (strain PCC 8801 / RF-1) (Cyanothece sp. (strain PCC 8801)).